Reading from the N-terminus, the 152-residue chain is Peptide deformylase (152 aa).

Fe cation contacts are provided by Cys-88 and His-130. Residue Glu-131 is part of the active site. Residue His-134 participates in Fe cation binding.

The protein belongs to the polypeptide deformylase family. It depends on Fe(2+) as a cofactor.

The catalysed reaction is N-terminal N-formyl-L-methionyl-[peptide] + H2O = N-terminal L-methionyl-[peptide] + formate. Removes the formyl group from the N-terminal Met of newly synthesized proteins. Requires at least a dipeptide for an efficient rate of reaction. N-terminal L-methionine is a prerequisite for activity but the enzyme has broad specificity at other positions. The chain is Peptide deformylase from Syntrophomonas wolfei subsp. wolfei (strain DSM 2245B / Goettingen).